Reading from the N-terminus, the 533-residue chain is Putative adhesin P1-like protein MPN_409 (533 aa).

Disordered regions lie at residues 15–45 (KNHR…GSRS) and 92–166 (SGWR…SITP). Over residues 28–45 (TGAGSSSGTSTNTSGSRS) the composition is skewed to low complexity. Residues 95 to 107 (RNDKNGQSDENHT) are compositionally biased toward basic and acidic residues.

This sequence belongs to the adhesin P1 family.

This is Putative adhesin P1-like protein MPN_409 from Mycoplasma pneumoniae (strain ATCC 29342 / M129 / Subtype 1) (Mycoplasmoides pneumoniae).